We begin with the raw amino-acid sequence, 637 residues long: DNA mismatch repair protein MutL (637 aa).

2 disordered regions span residues 352-384 and 405-430; these read DDFTSAKPSEDRGSTSSNEENEQRSSIDKNVLF and ASVEPALEKEPPAAELTAGAKGAMEQ.

It belongs to the DNA mismatch repair MutL/HexB family.

Its function is as follows. This protein is involved in the repair of mismatches in DNA. It is required for dam-dependent methyl-directed DNA mismatch repair. May act as a 'molecular matchmaker', a protein that promotes the formation of a stable complex between two or more DNA-binding proteins in an ATP-dependent manner without itself being part of a final effector complex. In Halalkalibacterium halodurans (strain ATCC BAA-125 / DSM 18197 / FERM 7344 / JCM 9153 / C-125) (Bacillus halodurans), this protein is DNA mismatch repair protein MutL.